The sequence spans 588 residues: Aspartate--tRNA ligase (588 aa).

An L-aspartate-binding site is contributed by Glu177. Residues 201 to 204 are aspartate; that stretch reads QIFK. Arg223 contacts L-aspartate. ATP is bound by residues 223–225 and Gln232; that span reads RDE. His451 is an L-aspartate binding site. An ATP-binding site is contributed by Glu485. Arg492 provides a ligand contact to L-aspartate. Residue 537–540 coordinates ATP; it reads GLDR.

It belongs to the class-II aminoacyl-tRNA synthetase family. Type 1 subfamily. Homodimer.

It is found in the cytoplasm. It catalyses the reaction tRNA(Asp) + L-aspartate + ATP = L-aspartyl-tRNA(Asp) + AMP + diphosphate. Catalyzes the attachment of L-aspartate to tRNA(Asp) in a two-step reaction: L-aspartate is first activated by ATP to form Asp-AMP and then transferred to the acceptor end of tRNA(Asp). The sequence is that of Aspartate--tRNA ligase from Staphylococcus saprophyticus subsp. saprophyticus (strain ATCC 15305 / DSM 20229 / NCIMB 8711 / NCTC 7292 / S-41).